Consider the following 423-residue polypeptide: D-tagatose-1,6-bisphosphate aldolase subunit GatZ (423 aa).

Belongs to the GatZ/KbaZ family. GatZ subfamily. As to quaternary structure, forms a complex with GatY.

It functions in the pathway carbohydrate metabolism; D-tagatose 6-phosphate degradation; D-glyceraldehyde 3-phosphate and glycerone phosphate from D-tagatose 6-phosphate: step 2/2. Component of the tagatose-1,6-bisphosphate aldolase GatYZ that is required for full activity and stability of the Y subunit. Could have a chaperone-like function for the proper and stable folding of GatY. When expressed alone, GatZ does not show any aldolase activity. Is involved in the catabolism of galactitol. The polypeptide is D-tagatose-1,6-bisphosphate aldolase subunit GatZ (Salmonella paratyphi B (strain ATCC BAA-1250 / SPB7)).